A 778-amino-acid chain; its full sequence is Endonuclease MutS2 (778 aa).

328 to 335 serves as a coordination point for ATP; it reads GPNTGGKT. Residues 702–777 enclose the Smr domain; sequence LDLRGKRYEE…GSGATIVTFK (76 aa).

This sequence belongs to the DNA mismatch repair MutS family. MutS2 subfamily. As to quaternary structure, homodimer. Binds to stalled ribosomes, contacting rRNA.

Endonuclease that is involved in the suppression of homologous recombination and thus may have a key role in the control of bacterial genetic diversity. In terms of biological role, acts as a ribosome collision sensor, splitting the ribosome into its 2 subunits. Detects stalled/collided 70S ribosomes which it binds and splits by an ATP-hydrolysis driven conformational change. Acts upstream of the ribosome quality control system (RQC), a ribosome-associated complex that mediates the extraction of incompletely synthesized nascent chains from stalled ribosomes and their subsequent degradation. Probably generates substrates for RQC. The sequence is that of Endonuclease MutS2 from Streptococcus pneumoniae (strain CGSP14).